The chain runs to 206 residues: MELKVTTLEGKEAGSVQLSDEIFGLEPRSDIIQRCVIWQLAKRQAGTHKAKGRAEVWRTGKKMYKQKGTGGARHGSQRVPQFRGGGRAFGPVVRSHAIDLPKKVRVLALRHALSAKAKGGGLIVLDKAELEAAKTKTLVGHFSGLGLESALIIDGAEVNNGFAAAARNIPNIDVLPVQGINVYDILRRKKLVLTKAAVDALEARFK.

It belongs to the universal ribosomal protein uL4 family. Part of the 50S ribosomal subunit.

Functionally, one of the primary rRNA binding proteins, this protein initially binds near the 5'-end of the 23S rRNA. It is important during the early stages of 50S assembly. It makes multiple contacts with different domains of the 23S rRNA in the assembled 50S subunit and ribosome. Forms part of the polypeptide exit tunnel. The sequence is that of Large ribosomal subunit protein uL4 from Rhodopseudomonas palustris (strain ATCC BAA-98 / CGA009).